A 251-amino-acid polypeptide reads, in one-letter code: MNVADLLHVLNELLYPELFNDYGPNGLQVGDAQAPVRKIAVAVTADLATIEKAIACESNVLLVHHGLFWKGMPYPITGMLYQRMQRLIENNIQLIAYHLPLDAHPEVGNNWKVAKDLGWERLESFGSTKPSLGVKGVFPEIGIHDFVSQLSSYYQAPVLAKALGGKESISSAALISGGAYKEISEAKSQEVDCFITGNFDEPAWSLAHELAINFLAFGHTATEKVGPKALTQYLKQVGCDSVVFLDTENPF.

Positions 64, 65, 102, 219, and 223 each coordinate a divalent metal cation.

This sequence belongs to the GTP cyclohydrolase I type 2/NIF3 family. As to quaternary structure, homohexamer.

In Chlamydia muridarum (strain MoPn / Nigg), this protein is GTP cyclohydrolase 1 type 2 homolog.